A 305-amino-acid polypeptide reads, in one-letter code: MRVYIAHNGCLEAEPIYGTICELVAQRKMSVITDPHARNNESARNTDSGVVSLNQAGRNKYLDQETTSPATSRSINVPFCAGISIGGDGTFLRMARDLKNTGTPLFGVNMGRMGFLVDIEPEDIVNLVENIVKGEYTEEKRLPITASVQRGGKKIHDEWAVNEITIERKVEGKVVDIEVFVDGCRVMDISCNGIIIATATGSTAYSFSSGGPIVWPEMKVTLVVPVSPHELFAKPIVLPDNRSILLKVTSRDNKVVLCSDGQVRLCLQSGDEIACHVGKVPVVFGRVKKGCFAEHLVKKFNLQTA.

Aspartate 88 acts as the Proton acceptor in catalysis. NAD(+) is bound by residues 88–89 (DG), arginine 93, 162–163 (NE), lysine 173, asparagine 192, 203–208 (TAYSFS), and glutamine 262.

The protein belongs to the NAD kinase family. It depends on a divalent metal cation as a cofactor.

The protein resides in the cytoplasm. It carries out the reaction NAD(+) + ATP = ADP + NADP(+) + H(+). Its function is as follows. Involved in the regulation of the intracellular balance of NAD and NADP, and is a key enzyme in the biosynthesis of NADP. Catalyzes specifically the phosphorylation on 2'-hydroxyl of the adenosine moiety of NAD to yield NADP. This is NAD kinase from Tropheryma whipplei (strain TW08/27) (Whipple's bacillus).